A 411-amino-acid polypeptide reads, in one-letter code: 2,3-bisphosphoglycerate-independent phosphoglycerate mutase (411 aa).

The protein belongs to the BPG-independent phosphoglycerate mutase family. A-PGAM subfamily.

The enzyme catalyses (2R)-2-phosphoglycerate = (2R)-3-phosphoglycerate. It participates in carbohydrate degradation; glycolysis; pyruvate from D-glyceraldehyde 3-phosphate: step 3/5. Functionally, catalyzes the interconversion of 2-phosphoglycerate and 3-phosphoglycerate. The protein is 2,3-bisphosphoglycerate-independent phosphoglycerate mutase of Methanosphaerula palustris (strain ATCC BAA-1556 / DSM 19958 / E1-9c).